Reading from the N-terminus, the 118-residue chain is Large ribosomal subunit protein bL20 (118 aa).

The protein belongs to the bacterial ribosomal protein bL20 family.

Binds directly to 23S ribosomal RNA and is necessary for the in vitro assembly process of the 50S ribosomal subunit. It is not involved in the protein synthesizing functions of that subunit. The protein is Large ribosomal subunit protein bL20 of Ectopseudomonas mendocina (strain ymp) (Pseudomonas mendocina).